A 475-amino-acid chain; its full sequence is UDP-N-acetylmuramate--L-alanine ligase (475 aa).

112–118 (GTHGKTT) is a binding site for ATP.

The protein belongs to the MurCDEF family.

It localises to the cytoplasm. The catalysed reaction is UDP-N-acetyl-alpha-D-muramate + L-alanine + ATP = UDP-N-acetyl-alpha-D-muramoyl-L-alanine + ADP + phosphate + H(+). The protein operates within cell wall biogenesis; peptidoglycan biosynthesis. Functionally, cell wall formation. In Paracidovorax citrulli (strain AAC00-1) (Acidovorax citrulli), this protein is UDP-N-acetylmuramate--L-alanine ligase.